Reading from the N-terminus, the 183-residue chain is ATP synthase subunit b, chloroplastic (183 aa).

Residues 27 to 49 form a helical membrane-spanning segment; that stretch reads LATNLINLTVVVGVLIFFGKGVL.

Belongs to the ATPase B chain family. In terms of assembly, F-type ATPases have 2 components, F(1) - the catalytic core - and F(0) - the membrane proton channel. F(1) has five subunits: alpha(3), beta(3), gamma(1), delta(1), epsilon(1). F(0) has four main subunits: a(1), b(1), b'(1) and c(10-14). The alpha and beta chains form an alternating ring which encloses part of the gamma chain. F(1) is attached to F(0) by a central stalk formed by the gamma and epsilon chains, while a peripheral stalk is formed by the delta, b and b' chains.

The protein resides in the plastid. It localises to the chloroplast thylakoid membrane. Functionally, f(1)F(0) ATP synthase produces ATP from ADP in the presence of a proton or sodium gradient. F-type ATPases consist of two structural domains, F(1) containing the extramembraneous catalytic core and F(0) containing the membrane proton channel, linked together by a central stalk and a peripheral stalk. During catalysis, ATP synthesis in the catalytic domain of F(1) is coupled via a rotary mechanism of the central stalk subunits to proton translocation. Its function is as follows. Component of the F(0) channel, it forms part of the peripheral stalk, linking F(1) to F(0). The sequence is that of ATP synthase subunit b, chloroplastic from Lolium perenne (Perennial ryegrass).